Here is a 398-residue protein sequence, read N- to C-terminus: Ornithine aminotransferase (398 aa).

Position 255 is an N6-(pyridoxal phosphate)lysine (Lys-255).

Belongs to the class-III pyridoxal-phosphate-dependent aminotransferase family. OAT subfamily. Requires pyridoxal 5'-phosphate as cofactor.

The protein resides in the cytoplasm. The catalysed reaction is a 2-oxocarboxylate + L-ornithine = L-glutamate 5-semialdehyde + an L-alpha-amino acid. It participates in amino-acid biosynthesis; L-proline biosynthesis; L-glutamate 5-semialdehyde from L-ornithine: step 1/1. In terms of biological role, catalyzes the interconversion of ornithine to glutamate semialdehyde. In Geobacillus sp. (strain WCH70), this protein is Ornithine aminotransferase.